A 475-amino-acid polypeptide reads, in one-letter code: FAD-dependent monooxygenase janM (475 aa).

A helical membrane pass occupies residues 8 to 24 (VIIVGGSIGGLTLAHCL). E35, G49, and R108 together coordinate FAD. The N-linked (GlcNAc...) asparagine glycan is linked to N147. FAD is bound by residues D299 and A312. The helical transmembrane segment at 432 to 451 (GWRFHAMLCILMLAILYTWV) threads the bilayer.

The protein belongs to the paxM FAD-dependent monooxygenase family. The cofactor is FAD.

The protein resides in the membrane. The protein operates within secondary metabolite biosynthesis. Functionally, FAD-dependent monooxygenase; part of the gene cluster that mediates the biosynthesis of the indole diterpenes janthitremanes such as shearinine K or shearinine A. The geranylgeranyl diphosphate (GGPP) synthase janG catalyzes the first step in janthitremane biosynthesis via conversion of farnesyl pyrophosphate and isopentyl pyrophosphate into geranylgeranyl pyrophosphate (GGPP). Condensation of indole-3-glycerol phosphate with GGPP by the prenyl transferase janC then forms 3-geranylgeranylindole (3-GGI). Epoxidation by the FAD-dependent monooxygenase janM leads to a epoxidized-GGI that is substrate of the terpene cyclase janB for cyclization to yield paspaline. Paspaline is subsequently converted to 13-desoxypaspaline by the cytochrome P450 monooxygenase janP, via beta-PC-M6 in a series of alpha-face oxidations. The cytochrome P450 monooxygenase janQ is proposed to carry out sequential beta-face oxidation steps at C-7 and C-13 of 13-desoxypaspaline to form paspalicine and paspalinine respectively. The indole diterpene prenyltransferase janD may then convert paspalinine into shearinine K which is substrate of janO and/or additional enzymes for oxidation and cyclization to generate shearinine A. The sequence is that of FAD-dependent monooxygenase janM from Penicillium janthinellum (Penicillium vitale).